Here is a 542-residue protein sequence, read N- to C-terminus: CTP synthase (542 aa).

Residues 1–265 form an amidoligase domain region; it reads MTRFIFITGG…DVQVCRHFHL (265 aa). Ser-13 lines the CTP pocket. Residue Ser-13 coordinates UTP. ATP-binding positions include 14-19 and Asp-71; that span reads SLGKGL. 2 residues coordinate Mg(2+): Asp-71 and Glu-139. Residues 146–148, 186–191, and Lys-222 contribute to the CTP site; these read DIE and KTKPTQ. UTP-binding positions include 186–191 and Lys-222; that span reads KTKPTQ. Positions 291–541 constitute a Glutamine amidotransferase type-1 domain; sequence TIAVVGKYTS…VQAAITQSRL (251 aa). Gly-353 provides a ligand contact to L-glutamine. Cys-380 functions as the Nucleophile; for glutamine hydrolysis in the catalytic mechanism. L-glutamine-binding positions include 381–384, Glu-404, and Arg-469; that span reads FGMQ. Residues His-514 and Glu-516 contribute to the active site.

Belongs to the CTP synthase family. In terms of assembly, homotetramer.

The catalysed reaction is UTP + L-glutamine + ATP + H2O = CTP + L-glutamate + ADP + phosphate + 2 H(+). It catalyses the reaction L-glutamine + H2O = L-glutamate + NH4(+). It carries out the reaction UTP + NH4(+) + ATP = CTP + ADP + phosphate + 2 H(+). Its pathway is pyrimidine metabolism; CTP biosynthesis via de novo pathway; CTP from UDP: step 2/2. Allosterically activated by GTP, when glutamine is the substrate; GTP has no effect on the reaction when ammonia is the substrate. The allosteric effector GTP functions by stabilizing the protein conformation that binds the tetrahedral intermediate(s) formed during glutamine hydrolysis. Inhibited by the product CTP, via allosteric rather than competitive inhibition. Catalyzes the ATP-dependent amination of UTP to CTP with either L-glutamine or ammonia as the source of nitrogen. Regulates intracellular CTP levels through interactions with the four ribonucleotide triphosphates. In Rhodospirillum rubrum (strain ATCC 11170 / ATH 1.1.1 / DSM 467 / LMG 4362 / NCIMB 8255 / S1), this protein is CTP synthase.